A 319-amino-acid chain; its full sequence is Ferrochelatase (319 aa).

H193 and E274 together coordinate Fe cation.

This sequence belongs to the ferrochelatase family.

It localises to the cytoplasm. It carries out the reaction heme b + 2 H(+) = protoporphyrin IX + Fe(2+). It participates in porphyrin-containing compound metabolism; protoheme biosynthesis; protoheme from protoporphyrin-IX: step 1/1. Functionally, catalyzes the ferrous insertion into protoporphyrin IX. This Actinobacillus pleuropneumoniae serotype 5b (strain L20) protein is Ferrochelatase.